The chain runs to 853 residues: G-type lectin S-receptor-like serine/threonine-protein kinase SRK (853 aa).

The first 31 residues, 1–31 (MRGELPNKHHSYTFFVFLFFFLILFPDLSIS), serve as a signal peptide directing secretion. The Extracellular segment spans residues 32–441 (VNTLSATESL…FGERRTIRGK (410 aa)). One can recognise a Bulb-type lectin domain in the interval 34 to 154 (TLSATESLTI…KINESDEFLW (121 aa)). Residues Asn-46, Asn-120, Asn-147, and Asn-243 are each glycosylated (N-linked (GlcNAc...) asparagine). The 37-residue stretch at 293–329 (PKDTCDLYGICGPYAYCDMSTSPTCNCIKGFQPLSPQ) folds into the EGF-like; atypical domain. 4 disulfides stabilise this stretch: Cys-297/Cys-309, Cys-303/Cys-317, Cys-378/Cys-403, and Cys-382/Cys-388. The region spanning 348-428 (CGEDRFFRLM…DGQDLFVRLA (81 aa)) is the PAN domain. Asn-387 is a glycosylation site (N-linked (GlcNAc...) asparagine). The chain crosses the membrane as a helical span at residues 442–462 (IIGLIIGISLMLVLSFIIYCF). At 463-853 (WKKKQKRARA…QITVSVINAR (391 aa)) the chain is on the cytoplasmic side. Positions 524 to 802 (FSDSNILGRG…PKMSSVVLML (279 aa)) constitute a Protein kinase domain. ATP is bound by residues 530–538 (LGRGGFGIV) and Lys-552. Phosphoserine is present on Ser-558. The tract at residues 613 to 631 (TQSSNKLNWQTRFSIINGI) is caM-binding. Asp-650 (proton acceptor) is an active-site residue. 2 positions are modified to phosphoserine: Ser-654 and Ser-667. The residue at position 684 (Thr-684) is a Phosphothreonine. The interval 807 to 838 (GEIPQPKRPGYCVGRSSLDTADSSSSTKRDSE) is disordered. Residues 822-832 (SSLDTADSSSS) are compositionally biased toward low complexity. Ser-831 is subject to Phosphoserine.

This sequence belongs to the protein kinase superfamily. Ser/Thr protein kinase family.

The protein localises to the cell membrane. It catalyses the reaction L-seryl-[protein] + ATP = O-phospho-L-seryl-[protein] + ADP + H(+). The enzyme catalyses L-threonyl-[protein] + ATP = O-phospho-L-threonyl-[protein] + ADP + H(+). Functionally, female specificity determinant of self-incompatibility. The polypeptide is G-type lectin S-receptor-like serine/threonine-protein kinase SRK (SRK) (Arabidopsis thaliana (Mouse-ear cress)).